The sequence spans 95 residues: Small ribosomal subunit protein uS19 (95 aa).

Residues 73 to 95 form a disordered region; sequence EFSPTRTYRGHGADKNAKGSKKK.

This sequence belongs to the universal ribosomal protein uS19 family.

Its function is as follows. Protein S19 forms a complex with S13 that binds strongly to the 16S ribosomal RNA. This chain is Small ribosomal subunit protein uS19, found in Deinococcus radiodurans (strain ATCC 13939 / DSM 20539 / JCM 16871 / CCUG 27074 / LMG 4051 / NBRC 15346 / NCIMB 9279 / VKM B-1422 / R1).